A 256-amino-acid polypeptide reads, in one-letter code: Thiazole synthase (256 aa).

Residue K95 is the Schiff-base intermediate with DXP of the active site. Residues G156, 182 to 183 (AG), and 204 to 205 (NT) each bind 1-deoxy-D-xylulose 5-phosphate.

This sequence belongs to the ThiG family. As to quaternary structure, homotetramer. Forms heterodimers with either ThiH or ThiS.

It is found in the cytoplasm. It carries out the reaction [ThiS sulfur-carrier protein]-C-terminal-Gly-aminoethanethioate + 2-iminoacetate + 1-deoxy-D-xylulose 5-phosphate = [ThiS sulfur-carrier protein]-C-terminal Gly-Gly + 2-[(2R,5Z)-2-carboxy-4-methylthiazol-5(2H)-ylidene]ethyl phosphate + 2 H2O + H(+). It functions in the pathway cofactor biosynthesis; thiamine diphosphate biosynthesis. Catalyzes the rearrangement of 1-deoxy-D-xylulose 5-phosphate (DXP) to produce the thiazole phosphate moiety of thiamine. Sulfur is provided by the thiocarboxylate moiety of the carrier protein ThiS. In vitro, sulfur can be provided by H(2)S. The chain is Thiazole synthase from Salmonella schwarzengrund (strain CVM19633).